The following is a 427-amino-acid chain: Probable fatty acid methyltransferase Rv3720 (427 aa).

S-adenosyl-L-methionine is bound by residues 167–168 (YT), 202–210 (LLDVGCGWG), and 227–232 (TLSAEQ).

It belongs to the CFA/CMAS family.

Functionally, may be a S-adenosylmethionine-dependent methyltransferase involved in fatty acid metabolism. This chain is Probable fatty acid methyltransferase Rv3720, found in Mycobacterium tuberculosis (strain ATCC 25618 / H37Rv).